The sequence spans 236 residues: CHD1 helical C-terminal domain containing protein 1 (236 aa).

Positions 1–29 (MEASDWQGGEGDKPLEKVGSVPCLERSSS) are disordered. The interval 44-145 (LSQDTFKICK…TNQTAKFLAA (102 aa)) is CHD1 helical C-terminal domain (CHCT). Residues 197-236 (LEEPRSSHCSRGDSLRKLPQKPKLKKKRIKERLESPKSCS) form a disordered region. A compositionally biased stretch (basic and acidic residues) spans 198-212 (EEPRSSHCSRGDSLR). The segment covering 214–226 (LPQKPKLKKKRIK) has biased composition (basic residues). Over residues 227–236 (ERLESPKSCS) the composition is skewed to basic and acidic residues.

In terms of tissue distribution, exclusively expressed in testes.

The protein localises to the cytoplasm. It localises to the nucleus. In terms of biological role, may play a role in regulation of apoptosis. This is CHD1 helical C-terminal domain containing protein 1 (Chct1) from Mus musculus (Mouse).